A 475-amino-acid chain; its full sequence is Bifunctional protein HldE (475 aa).

A ribokinase region spans residues 1–318 (MKVTLPDFER…ENAVRGRAET (318 aa)). 195 to 198 (NLSE) contacts ATP. Residue Asp264 is part of the active site. Residues 344-475 (MTNGVFDILH…NIIKKIQKNS (132 aa)) form a cytidylyltransferase region.

In the N-terminal section; belongs to the carbohydrate kinase PfkB family. It in the C-terminal section; belongs to the cytidylyltransferase family. In terms of assembly, homodimer.

The enzyme catalyses D-glycero-beta-D-manno-heptose 7-phosphate + ATP = D-glycero-beta-D-manno-heptose 1,7-bisphosphate + ADP + H(+). It catalyses the reaction D-glycero-beta-D-manno-heptose 1-phosphate + ATP + H(+) = ADP-D-glycero-beta-D-manno-heptose + diphosphate. Its pathway is nucleotide-sugar biosynthesis; ADP-L-glycero-beta-D-manno-heptose biosynthesis; ADP-L-glycero-beta-D-manno-heptose from D-glycero-beta-D-manno-heptose 7-phosphate: step 1/4. It functions in the pathway nucleotide-sugar biosynthesis; ADP-L-glycero-beta-D-manno-heptose biosynthesis; ADP-L-glycero-beta-D-manno-heptose from D-glycero-beta-D-manno-heptose 7-phosphate: step 3/4. Its function is as follows. Catalyzes the phosphorylation of D-glycero-D-manno-heptose 7-phosphate at the C-1 position to selectively form D-glycero-beta-D-manno-heptose-1,7-bisphosphate. Catalyzes the ADP transfer from ATP to D-glycero-beta-D-manno-heptose 1-phosphate, yielding ADP-D-glycero-beta-D-manno-heptose. The sequence is that of Bifunctional protein HldE from Cronobacter sakazakii (strain ATCC BAA-894) (Enterobacter sakazakii).